Consider the following 166-residue polypeptide: Phospholipase A2 inhibitor CgMIP-II (166 aa).

The N-terminal stretch at 1–19 (MRLILLSGLLLLGTFLANG) is a signal peptide. Residues 46–161 (LRYALMTVHN…CDDNLLVVCE (116 aa)) form the C-type lectin domain. Intrachain disulfides connect Cys-83-Cys-160 and Cys-138-Cys-152. The N-linked (GlcNAc...) asparagine glycan is linked to Asn-122.

It belongs to the alpha-type phospholipase A2 inhibitor family. In terms of assembly, homomer composed of 20-25-kDa subunits that form oligomers of 180 kDa. Post-translationally, N-glycosylated. The glycosidic chain may contain superficial sialic acid residues. As to expression, expressed by the liver.

It is found in the secreted. Its function is as follows. Selectively inhibits the toxic properties of myotoxin-II from the same venom (AC P81165). Does not inhibit PLA2, anti-coagulant and lethal activities of the basic myotoxin I from the same venom (AC P0DQP6), nor the different crotoxin forms (heterodimer or subunit B alone). Does not block the enzymatic activity of crude acidic PLA2 fractions from the same venom. This Cerrophidion godmani (Porthidium godmani) protein is Phospholipase A2 inhibitor CgMIP-II.